The primary structure comprises 64 residues: Large ribosomal subunit protein bL33c (64 aa).

It belongs to the bacterial ribosomal protein bL33 family.

Its subcellular location is the plastid. It is found in the chloroplast. The sequence is that of Large ribosomal subunit protein bL33c from Thalassiosira pseudonana (Marine diatom).